A 506-amino-acid chain; its full sequence is Dipeptide and tripeptide permease A (506 aa).

The Cytoplasmic portion of the chain corresponds to 1-36 (MSTANNNSEHPESVSLNAFKQPKAFYLIFSIELWER). The helical transmembrane segment at 37-57 (FGYYGLQGIMAVYLVKMLGLS) threads the bilayer. Topologically, residues 58 to 61 (EADS) are periplasmic. The chain crosses the membrane as a helical span at residues 62–82 (ITLFSSFSALVYGFVAIGGWL). Over 83–91 (GDKVLGSKR) the chain is Cytoplasmic. Helical transmembrane passes span 92–112 (VIVL…YSGH) and 113–133 (EIFW…LFKA). Over 134–155 (NPSSLLSTCYEKDDPRLDGAFT) the chain is Cytoplasmic. Residues 156-176 (MYYMSVNIGSFLSMLATPWLA) form a helical membrane-spanning segment. Topologically, residues 177-180 (AKYG) are periplasmic. Residues 181–201 (WSVAFSLSVVGMLITLVNFMV) form a helical membrane-spanning segment. The Cytoplasmic portion of the chain corresponds to 202–222 (CHKWVKQHGSKPDFKPLQVKK). Residues 223–243 (LLMVLVGVVALVALSSWLLHN) form a helical membrane-spanning segment. At 244 to 248 (QIIAR) the chain is on the periplasmic side. The chain crosses the membrane as a helical span at residues 249-269 (WALAIVSIGIVIVFAKETFAL). The Cytoplasmic portion of the chain corresponds to 270-276 (HGAARRK). A helical membrane pass occupies residues 277–297 (MIVAFLLMLEAVVFFVLYSQM). Residues 298–322 (PTSLNFFAIHNVEHNILGLAFEPEQ) are Periplasmic-facing. A helical transmembrane segment spans residues 323–343 (YQALNPFWIMLASPILAALYN). Topologically, residues 344 to 354 (KMGDRLPMPHK) are cytoplasmic. The chain crosses the membrane as a helical span at residues 355–375 (FAFGMILCSGAFLVLPWGASF). The Periplasmic segment spans residues 376-385 (ANEQGIVSVN). Residues 386–406 (WLILSYALQSIGELMISGLGL) traverse the membrane as a helical segment. Residues 407–416 (AMVAQLVPQR) are Cytoplasmic-facing. The chain crosses the membrane as a helical span at residues 417-437 (LMGFIMGSWFLTTAAAALIAG). The Periplasmic portion of the chain corresponds to 438–461 (KVAGLTAVPGDVNDAHASLAIYSH). The helical transmembrane segment at 462–482 (VFMQIGIATAVIAILMMLTAP) threads the bilayer. Over 483–506 (KLHRMTLDTAEDTEKKAQAAAITN) the chain is Cytoplasmic.

This sequence belongs to the major facilitator superfamily. Proton-dependent oligopeptide transporter (POT/PTR) (TC 2.A.17) family. DtpA subfamily.

Its subcellular location is the cell inner membrane. Its function is as follows. Proton-dependent permease that transports di- and tripeptides. The sequence is that of Dipeptide and tripeptide permease A from Serratia proteamaculans (strain 568).